The primary structure comprises 232 residues: Orotidine 5'-phosphate decarboxylase (232 aa).

Substrate is bound by residues D14, K36, 63–72, T122, R183, Q192, G212, and R213; that span reads DLKFHDIPNT. Catalysis depends on K65, which acts as the Proton donor.

Belongs to the OMP decarboxylase family. Type 1 subfamily. As to quaternary structure, homodimer.

It carries out the reaction orotidine 5'-phosphate + H(+) = UMP + CO2. It functions in the pathway pyrimidine metabolism; UMP biosynthesis via de novo pathway; UMP from orotate: step 2/2. Catalyzes the decarboxylation of orotidine 5'-monophosphate (OMP) to uridine 5'-monophosphate (UMP). In Psychrobacter arcticus (strain DSM 17307 / VKM B-2377 / 273-4), this protein is Orotidine 5'-phosphate decarboxylase.